The chain runs to 354 residues: Probable protein phosphatase 2C 27 (354 aa).

Residues 54–319 (RSGDWSDIGG…DNLTAVMVSF (266 aa)) enclose the PPM-type phosphatase domain. Mn(2+)-binding residues include Asp98, Gly99, Asp267, and Asp310.

The protein belongs to the PP2C family. The cofactor is Mg(2+). It depends on Mn(2+) as a cofactor.

It carries out the reaction O-phospho-L-seryl-[protein] + H2O = L-seryl-[protein] + phosphate. The catalysed reaction is O-phospho-L-threonyl-[protein] + H2O = L-threonyl-[protein] + phosphate. This chain is Probable protein phosphatase 2C 27, found in Oryza sativa subsp. japonica (Rice).